Consider the following 100-residue polypeptide: Class II hydrophobin CU (100 aa).

Residues 1 to 25 (MQFSIATIALFLSSAMAAPYSGNSN) form the signal peptide. Cystine bridges form between cysteine 32-cysteine 82, cysteine 42-cysteine 72, cysteine 43-cysteine 55, and cysteine 83-cysteine 94.

Belongs to the cerato-ulmin hydrophobin family. As to quaternary structure, homotetramer. Further self-assembles to form highly ordered films at water-air interfaces through intermolecular interactions.

The protein resides in the secreted. Its subcellular location is the cell wall. In terms of biological role, aerial growth, conidiation, and dispersal of filamentous fungi in the environment rely upon a capability of their secreting small amphipathic proteins called hydrophobins (HPBs) with low sequence identity. Class I can self-assemble into an outermost layer of rodlet bundles on aerial cell surfaces, conferring cellular hydrophobicity that supports fungal growth, development and dispersal; whereas Class II form highly ordered films at water-air interfaces through intermolecular interactions but contribute nothing to the rodlet structure. CU is a class II hydrophobin that is implicated in the pathogenicity of this fungus on elm trees. Required for hydrophobicity and adherence of the cells and acts as a parasitic fitness factor by protecting infectious propagules from desiccation. Reduces the interfacial tension of both oil-water and air-water interfaces. The chain is Class II hydrophobin CU from Ophiostoma ulmi (Dutch elm disease fungus).